The primary structure comprises 197 residues: GTP cyclohydrolase-2 (197 aa).

49–53 contacts GTP; that stretch reads RVHSE. Residues C54, C65, and C67 each coordinate Zn(2+). GTP is bound by residues Q70, 92–94, and T114; that span reads EGR. D126 serves as the catalytic Proton acceptor. The active-site Nucleophile is the R128. GTP-binding residues include T149 and K154.

The protein belongs to the GTP cyclohydrolase II family. In terms of assembly, homodimer. Zn(2+) is required as a cofactor.

It catalyses the reaction GTP + 4 H2O = 2,5-diamino-6-hydroxy-4-(5-phosphoribosylamino)-pyrimidine + formate + 2 phosphate + 3 H(+). It functions in the pathway cofactor biosynthesis; riboflavin biosynthesis; 5-amino-6-(D-ribitylamino)uracil from GTP: step 1/4. Its function is as follows. Catalyzes the conversion of GTP to 2,5-diamino-6-ribosylamino-4(3H)-pyrimidinone 5'-phosphate (DARP), formate and pyrophosphate. The chain is GTP cyclohydrolase-2 from Cronobacter sakazakii (strain ATCC BAA-894) (Enterobacter sakazakii).